The primary structure comprises 203 residues: Non-histone protein 10 (203 aa).

Serine 2 bears the N-acetylserine mark. 2 disordered regions span residues 78 to 97 and 161 to 203; these read KSKT…PKRP and ISNI…VSSN. Positions 94–158 form a DNA-binding region, HMG box; that stretch reads PKRPTNAYLL…RYQMEMEIYN (65 aa).

As to quaternary structure, component of the chromatin-remodeling INO80 complex, at least composed of ARP4, ARP5, ARP8, RVB1, RVB2, TAF14, NHP10, IES1, IES3, IES4, IES6, ACT1, IES2, IES5 and INO80.

The protein localises to the nucleus. Its function is as follows. Probably involved in transcription regulation via its interaction with the INO80 complex, a chromatin remodeling complex. This Saccharomyces cerevisiae (strain ATCC 204508 / S288c) (Baker's yeast) protein is Non-histone protein 10 (NHP10).